The primary structure comprises 229 residues: ATP synthase subunit a (229 aa).

6 consecutive transmembrane segments (helical) span residues 25–45, 82–102, 104–124, 142–162, 181–201, and 202–222; these read ADAV…SIAA, FFPL…IGLV, GFFP…VVFV, FLGP…IGHL, LVLI…MMLM, and GVLV…IYIQ.

It belongs to the ATPase A chain family. F-type ATPases have 2 components, CF(1) - the catalytic core - and CF(0) - the membrane proton channel. CF(1) has five subunits: alpha(3), beta(3), gamma(1), delta(1), epsilon(1). CF(0) has three main subunits: a(1), b(2) and c(9-12). The alpha and beta chains form an alternating ring which encloses part of the gamma chain. CF(1) is attached to CF(0) by a central stalk formed by the gamma and epsilon chains, while a peripheral stalk is formed by the delta and b chains.

It localises to the cell inner membrane. Key component of the proton channel; it plays a direct role in the translocation of protons across the membrane. The polypeptide is ATP synthase subunit a (Citrifermentans bemidjiense (strain ATCC BAA-1014 / DSM 16622 / JCM 12645 / Bem) (Geobacter bemidjiensis)).